The following is a 153-amino-acid chain: Small ribosomal subunit protein uS17 (153 aa).

This sequence belongs to the universal ribosomal protein uS17 family.

This chain is Small ribosomal subunit protein uS17 (RpS11), found in Anopheles gambiae (African malaria mosquito).